The sequence spans 641 residues: White-opaque regulator 3 (641 aa).

Residues 13 to 27 (ANVNHQQLSQDTNSI) show a composition bias toward polar residues. Disordered stretches follow at residues 13-38 (ANVN…QQQP), 146-245 (QLAS…PMTR), and 258-287 (PIIY…PEPR). Low complexity-rich tracts occupy residues 28-38 (PQQQLQQQQQP) and 151-160 (QNQDQNQSQN). The segment covering 161–172 (RYEQSSMTSIHT) has biased composition (polar residues). Low complexity predominate over residues 173–184 (NDNSSSVNNSPN). Residues 193–204 (STFQPQHSNEGS) show a composition bias toward polar residues. 2 stretches are compositionally biased toward low complexity: residues 216 to 242 (QQQQ…PQQP) and 264 to 280 (SSNS…NSSS). A dksA C4-type zinc finger spans residues 317–337 (CRRCGSEIPLAERRFVLCPSC). Disordered regions lie at residues 366 to 409 (LSKE…KVCQ), 480 to 507 (MSHQ…PQPH), 522 to 550 (NSGV…HNGS), and 568 to 641 (LQLQ…YPNN). A compositionally biased stretch (basic and acidic residues) spans 379–400 (QNNKSNEDQNNESRRGSQEKPA). Residues 486-495 (QPPPPPPPPL) show a composition bias toward pro residues. Residues 522 to 533 (NSGVAGIQQPNN) show a composition bias toward polar residues. Residues 569-579 (QLQQQQQQQQQ) are compositionally biased toward low complexity. Positions 597-606 (SFPPPPPPPL) are enriched in pro residues. The span at 610-641 (QHQGLQQYSHAQQQQQQQHQQQQPYHQEYPNN) shows a compositional bias: low complexity.

It localises to the nucleus. In terms of biological role, transcription factor that modulates the white-opaque switch. The protein is White-opaque regulator 3 (WOR3) of Candida albicans (strain SC5314 / ATCC MYA-2876) (Yeast).